A 260-amino-acid chain; its full sequence is Sugar fermentation stimulation protein homolog (260 aa).

The protein belongs to the SfsA family.

The polypeptide is Sugar fermentation stimulation protein homolog (Chloroflexus aggregans (strain MD-66 / DSM 9485)).